Consider the following 199-residue polypeptide: Outer-membrane lipoprotein LolB (199 aa).

The signal sequence occupies residues 1-28 (MAAAGSLCQTAWRVRGWLAAGLCALLAG). Cys-29 is lipidated: N-palmitoyl cysteine. Residue Cys-29 is the site of S-diacylglycerol cysteine attachment.

It belongs to the LolB family. In terms of assembly, monomer.

The protein resides in the cell outer membrane. Its function is as follows. Plays a critical role in the incorporation of lipoproteins in the outer membrane after they are released by the LolA protein. In Bordetella petrii (strain ATCC BAA-461 / DSM 12804 / CCUG 43448), this protein is Outer-membrane lipoprotein LolB.